The sequence spans 327 residues: Aspartate carbamoyltransferase catalytic subunit (327 aa).

2 residues coordinate carbamoyl phosphate: R54 and T55. K82 serves as a coordination point for L-aspartate. The carbamoyl phosphate site is built by R104, H134, and Q137. Positions 177 and 232 each coordinate L-aspartate. Residues G280 and P281 each contribute to the carbamoyl phosphate site.

Belongs to the aspartate/ornithine carbamoyltransferase superfamily. ATCase family. In terms of assembly, heterododecamer (2C3:3R2) of six catalytic PyrB chains organized as two trimers (C3), and six regulatory PyrI chains organized as three dimers (R2).

It catalyses the reaction carbamoyl phosphate + L-aspartate = N-carbamoyl-L-aspartate + phosphate + H(+). Its pathway is pyrimidine metabolism; UMP biosynthesis via de novo pathway; (S)-dihydroorotate from bicarbonate: step 2/3. In terms of biological role, catalyzes the condensation of carbamoyl phosphate and aspartate to form carbamoyl aspartate and inorganic phosphate, the committed step in the de novo pyrimidine nucleotide biosynthesis pathway. In Micrococcus luteus (strain ATCC 4698 / DSM 20030 / JCM 1464 / CCM 169 / CCUG 5858 / IAM 1056 / NBRC 3333 / NCIMB 9278 / NCTC 2665 / VKM Ac-2230) (Micrococcus lysodeikticus), this protein is Aspartate carbamoyltransferase catalytic subunit.